Reading from the N-terminus, the 206-residue chain is MIGRLRGNLLEKQPPELLIEVSGIGYEVQMPMSCFYELPPIGTEAIIYIHYVVREDAQLLYGFNTKKERALFREVIKANGVGPKLGLAILSGMTASQFVQSVEREDISTLVKLPGVGKKTAERLVVEMKDRLKGWGAGDLFTPADTTSMDDASDLISSPQSAQDEAVSALISLGYKPVQASKMVSQVAKPDMTSESLIRESLKSMI.

The tract at residues 1–64 (MIGRLRGNLL…EDAQLLYGFN (64 aa)) is domain I. Positions 65–143 (TKKERALFRE…GWGAGDLFTP (79 aa)) are domain II. A flexible linker region spans residues 144–157 (ADTTSMDDASDLIS). Residues 158–206 (SPQSAQDEAVSALISLGYKPVQASKMVSQVAKPDMTSESLIRESLKSMI) are domain III.

This sequence belongs to the RuvA family. Homotetramer. Forms an RuvA(8)-RuvB(12)-Holliday junction (HJ) complex. HJ DNA is sandwiched between 2 RuvA tetramers; dsDNA enters through RuvA and exits via RuvB. An RuvB hexamer assembles on each DNA strand where it exits the tetramer. Each RuvB hexamer is contacted by two RuvA subunits (via domain III) on 2 adjacent RuvB subunits; this complex drives branch migration. In the full resolvosome a probable DNA-RuvA(4)-RuvB(12)-RuvC(2) complex forms which resolves the HJ.

Its subcellular location is the cytoplasm. Its function is as follows. The RuvA-RuvB-RuvC complex processes Holliday junction (HJ) DNA during genetic recombination and DNA repair, while the RuvA-RuvB complex plays an important role in the rescue of blocked DNA replication forks via replication fork reversal (RFR). RuvA specifically binds to HJ cruciform DNA, conferring on it an open structure. The RuvB hexamer acts as an ATP-dependent pump, pulling dsDNA into and through the RuvAB complex. HJ branch migration allows RuvC to scan DNA until it finds its consensus sequence, where it cleaves and resolves the cruciform DNA. This Aliivibrio salmonicida (strain LFI1238) (Vibrio salmonicida (strain LFI1238)) protein is Holliday junction branch migration complex subunit RuvA.